Consider the following 376-residue polypeptide: Acetate kinase (376 aa).

Asn7 serves as a coordination point for Mg(2+). Lys14 contacts ATP. Arg71 serves as a coordination point for substrate. Residue Asp128 is the Proton donor/acceptor of the active site. ATP-binding positions include 188-192 (HLGNG), 262-264 (DFR), and 310-314 (GVGEN). Glu364 contributes to the Mg(2+) binding site.

This sequence belongs to the acetokinase family. Homodimer. Requires Mg(2+) as cofactor. The cofactor is Mn(2+).

Its subcellular location is the cytoplasm. It carries out the reaction acetate + ATP = acetyl phosphate + ADP. The protein operates within metabolic intermediate biosynthesis; acetyl-CoA biosynthesis; acetyl-CoA from acetate: step 1/2. Functionally, catalyzes the formation of acetyl phosphate from acetate and ATP. Can also catalyze the reverse reaction. The chain is Acetate kinase from Mycolicibacterium smegmatis (strain ATCC 700084 / mc(2)155) (Mycobacterium smegmatis).